Reading from the N-terminus, the 185-residue chain is Elongation factor P (185 aa).

Belongs to the elongation factor P family.

The protein localises to the cytoplasm. The protein operates within protein biosynthesis; polypeptide chain elongation. Functionally, involved in peptide bond synthesis. Stimulates efficient translation and peptide-bond synthesis on native or reconstituted 70S ribosomes in vitro. Probably functions indirectly by altering the affinity of the ribosome for aminoacyl-tRNA, thus increasing their reactivity as acceptors for peptidyl transferase. This is Elongation factor P from Picosynechococcus sp. (strain ATCC 27264 / PCC 7002 / PR-6) (Agmenellum quadruplicatum).